Consider the following 219-residue polypeptide: Flagellin B4 (219 aa).

Positions 1-5 are excised as a propeptide; that stretch reads MHRKG.

This sequence belongs to the archaeal flagellin family.

The protein localises to the archaeal flagellum. Its function is as follows. Flagellin is the subunit protein which polymerizes to form the filaments of archaeal flagella. The sequence is that of Flagellin B4 (flaB4) from Pyrococcus abyssi (strain GE5 / Orsay).